A 471-amino-acid polypeptide reads, in one-letter code: BPI fold-containing family B member 1 (471 aa).

An N-terminal signal peptide occupies residues 1-18; that stretch reads MTNPWIVSLLLGATLVQA. Residues Asn-150, Asn-157, Asn-260, and Asn-397 are each glycosylated (N-linked (GlcNAc...) asparagine). Cys-154 and Cys-197 are disulfide-bonded.

This sequence belongs to the BPI/LBP/Plunc superfamily. Plunc family.

Its subcellular location is the secreted. Functionally, may play a role in innate immunity in mouth, nose and lungs. Binds bacterial lipopolysaccharide (LPS) and modulates the cellular responses to LPS. The polypeptide is BPI fold-containing family B member 1 (Bpifb1) (Rattus norvegicus (Rat)).